Here is a 707-residue protein sequence, read N- to C-terminus: Alpha-hemolysin translocation ATP-binding protein HlyB (707 aa).

The region spanning 3-125 (SCHKIDYGLY…ALYQGHIILI (123 aa)) is the Peptidase C39 domain. Residue His-83 is part of the active site. The region spanning 154 to 436 (FIETLVVSVF…LAQIWQDFQQ (283 aa)) is the ABC transmembrane type-1 domain. A run of 5 helical transmembrane segments spans residues 158–178 (LVVSVFLQLFALITPLFFQVV), 191–211 (LNVITVALSVVVVFEIILSGL), 269–289 (ALTSVLDLLFSFIFFAVMWYY), 295–315 (LVILFSLPCYAAWSVFISPIL), and 388–408 (VMIINLWLGAHLVISGDLSIG). Positions 468–703 (ITFRNIRFRY…PESLYSYLYQ (236 aa)) constitute an ABC transporter domain. An ATP-binding site is contributed by 502–509 (GRSGSGKS).

This sequence belongs to the ABC transporter superfamily. Protein-1 exporter (TC 3.A.1.109) family. As to quaternary structure, homodimer.

It localises to the cell inner membrane. Its function is as follows. Part of the ABC transporter complex HlyBD involved in hemolysin export. Transmembrane domains (TMD) form a pore in the inner membrane and the ATP-binding domain (NBD) is responsible for energy generation. The protein is Alpha-hemolysin translocation ATP-binding protein HlyB (hlyB) of Escherichia coli.